We begin with the raw amino-acid sequence, 303 residues long: MSVILVSAGYDHTIRFWEALTGVCSRTIQHSDSQVNRLEITNDKKLLATAGHQNVRLYDIRTTNPNPVASFEGHRGNVTSVSFQQDNRWMVTSSEDGTIKVWDVRSPSIPRNYKHNAPVNEVVIHPNQGELISCDRDGNIRIWDLGENQCTHQLTPEDDTSLQSLSMASDGSMLAAANTKGNCYVWEMPNHTDASHLKPVTKFRAHSTYITRILLSSDVKHLATCSADHTARVWSIDDDFKLETTLDGHQRWVWDCAFSADSAYLVTASSDHYVRLWDLSTREIVRQYGGHHKGAVCVALNDV.

WD repeat units lie at residues 1 to 27, 30 to 68, 73 to 112, 114 to 153, 157 to 196, 205 to 244, and 248 to 287; these read MSVILVSAGYDHTIRFWEALTGVCSRT, HSDSQVNRLEITNDKKLLATAGHQNVRLYDIRTTNPNPV, GHRGNVTSVSFQQDNRWMVTSSEDGTIKVWDVRSPSIPRN, KHNAPVNEVVIHPNQGELISCDRDGNIRIWDLGENQCTHQ, EDDTSLQSLSMASDGSMLAAANTKGNCYVWEMPNHTDASH, AHSTYITRILLSSDVKHLATCSADHTARVWSIDDDFKLET, and GHQRWVWDCAFSADSAYLVTASSDHYVRLWDLSTREIVRQ.

The protein belongs to the WD repeat LST8 family. The target of rapamycin complex 1 (TORC1) is composed of at least KOG1, LST8, TCO89 and either TOR1 (TORC1-A) or TOR2 (TORC1-B). TORC1 binds to and is inhibited by FKBP-rapamycin. Interacts with PIB2; following activation of PIB2 by glutamine or cysteine and as part of the TORC1 complex. The target of rapamycin complex 2 (TORC2) is composed of at least AVO1, AVO2, BIT61, LST8, TOR2 and TSC11. TORC2 forms a homodimer. Contrary to TORC1, TORC2 does not bind to and is not sensitive to FKBP-rapamycin. LST8 binds to the C-terminal kinase domain in TOR2.

It is found in the cell membrane. The protein localises to the vacuole membrane. Functionally, essential component of both TORC1 and TORC2. TORC1 regulates multiple cellular processes to control cell growth in response to environmental signals. Nutrient limitation and environmental stress signals cause inactivation of TORC1. Active TORC1 positively controls ribosome biogenesis via control of rRNA, ribosomal protein and tRNA gene expression, and rRNA processing. TORC1 positively controls protein biosynthesis by regulation of mRNA stability, translation initiation factor activity, and high-affinity amino acid permeases that serve to provide amino acids for use by the translation machinery. TORC1 also promotes growth by sequestering a number of nutrient and general stress-responsive transcription factors in the cytoplasm. TORC1 negatively controls macroautophagy, a process to recycle surplus cytoplasmic mass under nutrient starvation conditions. LST8 is involved in the negative regulation of transcription factors GLN3 and RTG1-RTG3, limiting the synthesis of alpha-ketoglutarate, glutamate and glutamine. LST8 is required for targeting of amino acid permeases (AAPs) to the plasma membrane. TORC2 regulates cell cycle-dependent polarization of the actin-cytoskeleton, cell wall integrity, and receptor endocytosis. TORC2 controls polarity of the actin cytoskeleton, which is required for orienting the secretory pathway toward discrete growth sites, via the RHO1/PKC1/MAPK cell integrity pathway. LST8 is involved in maintenance of cell wall integrity. LST8 modulates TOR2 kinase activity. This chain is Target of rapamycin complex subunit LST8, found in Saccharomyces cerevisiae (strain ATCC 204508 / S288c) (Baker's yeast).